The following is a 213-amino-acid chain: Peroxiredoxin-5, mitochondrial (213 aa).

Residues 1-51 constitute a mitochondrion transit peptide; it reads MVQLRFCVLGSIAGSVLRASATWTCVAGRAGRKGAGWECGGARSFSSAAVT. Positions 55–213 constitute a Thioredoxin domain; that stretch reads IKVGDTIPSV…SLAPNILSQL (159 aa). K74 carries the post-translational modification N6-acetyllysine. The residue at position 82 (K82) is an N6-acetyllysine; alternate. The residue at position 82 (K82) is an N6-succinyllysine; alternate. Catalysis depends on C99, which acts as the Cysteine sulfenic acid (-SOH) intermediate. The S-palmitoyl cysteine moiety is linked to residue C99. The cysteines at positions 99 and 203 are disulfide-linked. N6-succinyllysine is present on K115. S170 and S181 each carry phosphoserine. The short motif at 211–213 is the Microbody targeting signal element; it reads SQL.

The protein belongs to the peroxiredoxin family. Prx5 subfamily. Monomer. S-palmitoylated. Palmitoylation occurs on the active site, inhibiting its reactivity; therefore PRDX5 palmitoylation status determines its antioxidant capacity. Post-translationally, S-palmitoylated. Depalmitoylated by ABHD10.

It localises to the mitochondrion. It is found in the cytoplasm. The protein localises to the peroxisome matrix. It catalyses the reaction a hydroperoxide + [thioredoxin]-dithiol = an alcohol + [thioredoxin]-disulfide + H2O. Its function is as follows. Thiol-specific peroxidase that catalyzes the reduction of hydrogen peroxide and organic hydroperoxides to water and alcohols, respectively. Plays a role in cell protection against oxidative stress by detoxifying peroxides and as sensor of hydrogen peroxide-mediated signaling events. This chain is Peroxiredoxin-5, mitochondrial, found in Rattus norvegicus (Rat).